Here is a 578-residue protein sequence, read N- to C-terminus: MSSESRENEVKAETKDEIANDGSPQLNGDNNIQSSDGHNDENEESLSRKRDSSGATVGDLKQEEKESMPKKEPEPTVKKIRGSGMPPPQQKYCLAIVRQLKRTKNSAPFKVPVDPIKQNIPDYPTIVKNPMDLGTIEKKLTSYEYSVPQEFIDDMNLMFSNCFLYNGTESPVGSMGKALQEVFERQLKQLPDAEQPAAAPVKKSKQKSASTAPPRTRRNSSVSSTSASVAASTAPKAASPAVLPEGKPRRRKNNSQMRFCSTVLKELYKRQYESFAFPFYQPVDPVACDCPDYFDVIKEPMDLSTIQSKLNKNEYSTLEEFESDILLMFNNCFTYNPPGTPVHVMGRQLENVFKEKWEARPKFDDATLVKQQEAETDALFDNGEEEEALMSEEEINGAKFAAVDKQISMLQDTLEAMKAKKMNRMRKPRRRDLTKEYGPITYAMQNELAERCNYLSAEQLSNVAEILREEMPWLRDTDEIEIDVGNMKPEVFHRIYRYVCKPDADSSEPASPVLMPTKPEKKKGRVLSETEQAEKIRRLQQQLDRFAGKTSPTSPESNNAANVSDSESDNESESSESA.

Residues 1–18 show a composition bias toward basic and acidic residues; the sequence is MSSESRENEVKAETKDEI. Disordered stretches follow at residues 1–89, 192–254, and 504–578; these read MSSE…PPPQ, DAEQ…RKNN, and ADSS…SESA. The span at 22 to 36 shows a compositional bias: polar residues; the sequence is GSPQLNGDNNIQSSD. 2 stretches are compositionally biased toward basic and acidic residues: residues 37 to 52 and 60 to 77; these read GHND…KRDS and LKQE…EPTV. The 107-residue stretch at 84–190 folds into the Bromo 1 domain; it reads GMPPPQQKYC…EVFERQLKQL (107 aa). Low complexity predominate over residues 219-242; sequence NSSVSSTSASVAASTAPKAASPAV. A phosphoserine mark is found at S221, S223, and S224. Phosphothreonine is present on T225. Residues S226 and S239 each carry the phosphoserine modification. In terms of domain architecture, Bromo 2 spans 251-360; sequence RKNNSQMRFC…NVFKEKWEAR (110 aa). Residues 430-510 enclose the NET domain; that stretch reads RRDLTKEYGP…KPDADSSEPA (81 aa). A Phosphoserine modification is found at S511. Basic and acidic residues predominate over residues 526–537; the sequence is VLSETEQAEKIR. The span at 550 to 563 shows a compositional bias: polar residues; the sequence is TSPTSPESNNAANV. The span at 566–578 shows a compositional bias: acidic residues; that stretch reads SESDNESESSESA.

Belongs to the BET family. As to quaternary structure, component of the SWR1 chromatin-remodeling complex.

It is found in the nucleus. Component of the SWR1 complex which mediates the ATP-dependent exchange of histone H2A for the H2A variant HZT1 leading to transcriptional regulation of selected genes by chromatin remodeling. The polypeptide is SWR1 complex bromodomain subunit bdf1 (bdf1) (Schizosaccharomyces pombe (strain 972 / ATCC 24843) (Fission yeast)).